The sequence spans 156 residues: Acyl carrier protein, mitochondrial (156 aa).

The transit peptide at 1–68 (MASRVLSAYV…GRVTQLCRQY (68 aa)) directs the protein to the mitochondrion. Positions 77 to 152 (EGIQDRVLYV…EIVDYIADKK (76 aa)) constitute a Carrier domain. Lysine 88 bears the N6-acetyllysine mark. At serine 112 the chain carries O-(pantetheine 4'-phosphoryl)serine.

Belongs to the acyl carrier protein (ACP) family. As to quaternary structure, mammalian complex I is composed of 45 different subunits. Interacts with ETFRF1. Identified in a complex composed of MALSU1, MIEF1 upstream open reading frame protein and NDUFAB1; within the trimeric complex, MIEF1 upstream open reading frame protein functions as a bridging scaffold that interacts with MALSU1 on one side, and with NDUFAB1 on the other side. The complex interacts with the mitochondrial large ribosomal subunit. Interacts with alpha-1-microglobulin chain; this interaction is required for the maintenance of mitochondrial redox homeostasis. Component of the mitochondrial core iron-sulfur cluster (ISC) complex composed of NFS1, LYRM4, NDUFAB1, ISCU, FXN, and FDX2; this complex is a heterohexamer containing two copies of each monomer. Component of the cyteine desulfurase complex composed of NFS1, LYRM4 and NDUFAB1; this complex contributes to the stability and cysteine desulfurase activity of NFS1. Phosphopantetheinylation at Ser-112 is essential for interactions with LYR motif-containing proteins.

It localises to the mitochondrion. Carrier of the growing fatty acid chain in fatty acid biosynthesis. Accessory and non-catalytic subunit of the mitochondrial membrane respiratory chain NADH dehydrogenase (Complex I), which functions in the transfer of electrons from NADH to the respiratory chain. Accessory protein, of the core iron-sulfur cluster (ISC) assembly complex, that regulates, in association with LYRM4, the stability and the cysteine desulfurase activity of NFS1 and participates in the [2Fe-2S] clusters assembly on the scaffolding protein ISCU. The core iron-sulfur cluster (ISC) assembly complex is involved in the de novo synthesis of a [2Fe-2S] cluster, the first step of the mitochondrial iron-sulfur protein biogenesis. This process is initiated by the cysteine desulfurase complex (NFS1:LYRM4:NDUFAB1) that produces persulfide which is delivered on the scaffold protein ISCU in a FXN-dependent manner. Then this complex is stabilized by FDX2 which provides reducing equivalents to accomplish the [2Fe-2S] cluster assembly. Finally, the [2Fe-2S] cluster is transferred from ISCU to chaperone proteins, including HSCB, HSPA9 and GLRX5. This is Acyl carrier protein, mitochondrial from Pongo pygmaeus (Bornean orangutan).